Reading from the N-terminus, the 1070-residue chain is Protocadherin-8 (1070 aa).

The signal sequence occupies residues 1–29 (MSPAKRWGSPCLFPLQLFSLCWVLSVAQS). Cadherin domains lie at 30 to 135 (KTVR…APRF), 136 to 245 (PRAQ…SPAF), 247 to 354 (QGAV…APEI), 393 to 497 (QEAG…APIF), 498 to 609 (TKPV…SPIL), and 615 to 721 (ANGS…VPAS). Residues 30–747 (KTVRYSTFEE…SGPSLQWDTP (718 aa)) lie on the Extracellular side of the membrane. The N-linked (GlcNAc...) asparagine glycan is linked to N616. Over residues 716-725 (SAVPASSGSP) the composition is skewed to low complexity. The tract at residues 716–740 (SAVPASSGSPEHSRPPGSRLAPSGP) is disordered. Residues 748 to 768 (LIVIIVLAGSCTLLLAAIIAI) form a helical membrane-spanning segment. The Cytoplasmic portion of the chain corresponds to 769–1070 (ATTCNRRKKE…SPKKGINENV (302 aa)). Disordered regions lie at residues 777–859 (KEVR…TGES), 906–928 (REAE…DSDS), and 1046–1070 (IGVP…NENV). Composition is skewed to basic and acidic residues over residues 780–790 (RKGGALREERP) and 906–921 (REAE…KGDS). S1053 is subject to Phosphoserine.

In terms of assembly, the N-terminal extracellular domain forms homophilic interactions; these interactions activate p38 MAPK via TAOK2 and trigger endocytosis. Interacts with CDH2; this interaction may lead to CDH2 cointernalization. Interacts with CDH11. Interacts with TAOK2.

The protein resides in the cell membrane. It localises to the cell projection. Its subcellular location is the dendrite. It is found in the presynaptic cell membrane. The protein localises to the postsynaptic cell membrane. Functionally, calcium-dependent cell-adhesion protein. May play a role in activity-induced synaptic reorganization underlying long term memory. Could be involved in CDH2 internalization through TAOK2/p38 MAPK pathway. In hippocampal neurons, may play a role in the down-regulation of dendritic spines, maybe through its action on CDH2 endocytosis. The chain is Protocadherin-8 (Pcdh8) from Mus musculus (Mouse).